The following is a 639-amino-acid chain: Chaperone protein DnaK (639 aa).

Thr198 carries the post-translational modification Phosphothreonine; by autocatalysis. The tract at residues 602–639 (QAKSQAQGGDNADAGKQANATADDVVDAEFEEVKDDKK) is disordered. Residues 625 to 639 (DVVDAEFEEVKDDKK) show a composition bias toward acidic residues.

This sequence belongs to the heat shock protein 70 family.

Functionally, acts as a chaperone. This is Chaperone protein DnaK from Shewanella baltica (strain OS195).